The primary structure comprises 1343 residues: DNA-directed RNA polymerase subunit beta (1343 aa).

The protein belongs to the RNA polymerase beta chain family. In terms of assembly, the RNAP catalytic core consists of 2 alpha, 1 beta, 1 beta' and 1 omega subunit. When a sigma factor is associated with the core the holoenzyme is formed, which can initiate transcription.

It catalyses the reaction RNA(n) + a ribonucleoside 5'-triphosphate = RNA(n+1) + diphosphate. In terms of biological role, DNA-dependent RNA polymerase catalyzes the transcription of DNA into RNA using the four ribonucleoside triphosphates as substrates. The protein is DNA-directed RNA polymerase subunit beta of Shewanella sp. (strain W3-18-1).